A 283-amino-acid chain; its full sequence is Polyamine aminopropyltransferase (283 aa).

The region spanning 2–237 is the PABS domain; the sequence is ELWYTEEHTD…GHWLFGFASK (236 aa). Q31 contributes to the S-methyl-5'-thioadenosine binding site. H62 and D86 together coordinate spermidine. S-methyl-5'-thioadenosine is bound by residues E106 and 137-138; that span reads DG. The active-site Proton acceptor is the D155. Residue 155–158 participates in spermidine binding; it reads DSTD. P162 is a binding site for S-methyl-5'-thioadenosine.

This sequence belongs to the spermidine/spermine synthase family. Homodimer or homotetramer.

It localises to the cytoplasm. The catalysed reaction is S-adenosyl 3-(methylsulfanyl)propylamine + putrescine = S-methyl-5'-thioadenosine + spermidine + H(+). Its pathway is amine and polyamine biosynthesis; spermidine biosynthesis; spermidine from putrescine: step 1/1. Catalyzes the irreversible transfer of a propylamine group from the amino donor S-adenosylmethioninamine (decarboxy-AdoMet) to putrescine (1,4-diaminobutane) to yield spermidine. In Clostridium perfringens (strain 13 / Type A), this protein is Polyamine aminopropyltransferase.